The chain runs to 754 residues: Phosphoinositide 3-kinase regulatory subunit 6 (754 aa).

Residues 343 to 363 (ERDLPTGADELPAPGSPEMER) form a disordered region.

Heterodimer of a catalytic subunit (PIK3CG) and a regulatory (PIK3R6) subunit. The binding of PIK3R6 to PIK3CG may exclude the binding of PIK3R5 to PIK3CG. Interacts with beta-gamma G protein dimers. Interacts with PDE3B and RAPGEF3; form a signaling complex that regulates phosphatidylinositol 3-kinase gamma in angiogenesis.

It is found in the cytoplasm. The protein resides in the cell membrane. Its function is as follows. Regulatory subunit of the PI3K gamma complex. Acts as an adapter to drive activation of PIK3CG by beta-gamma G protein dimers. The PIK3CG:PIK3R6 heterodimer is much less sensitive to beta-gamma G protein dimers than PIK3CG:PIK3R5 and its membrane recruitment and beta-gamma G protein dimer-dependent activation requires HRAS bound to PIK3CG. Recruits of the PI3K gamma complex to a PDE3B:RAPGEF3 signaling complex involved in angiogenesis; signaling seems to involve RRAS. The chain is Phosphoinositide 3-kinase regulatory subunit 6 (PIK3R6) from Homo sapiens (Human).